Here is a 253-residue protein sequence, read N- to C-terminus: TCF3 fusion partner (253 aa).

Disordered stretches follow at residues 49–72 and 142–211; these read SGGL…GRRR and DEGS…PELA. Serine 167 is subject to Phosphoserine. The segment covering 170–181 has biased composition (pro residues); the sequence is RRTPAPPEPGSP. Position 172 is a phosphothreonine (threonine 172). Residues serine 180 and serine 188 each carry the phosphoserine modification. Threonine 207 carries the post-translational modification Phosphothreonine. Lysine 216 is covalently cross-linked (Glycyl lysine isopeptide (Lys-Gly) (interchain with G-Cter in SUMO2)). Positions 234–253 are disordered; it reads VSRGPDKLLPYPTLASPASD. Phosphoserine is present on residues serine 249 and serine 252.

Interacts with NOL3; translocates NOL3 into the nucleus and negatively regulated TFPT-induced cell death. Component of the chromatin remodeling INO80 complex; specifically part of a complex module associated with the N-terminus of INO80.

It localises to the nucleus. In terms of biological role, appears to promote apoptosis in a p53/TP53-independent manner. Its function is as follows. Putative regulatory component of the chromatin remodeling INO80 complex which is involved in transcriptional regulation, DNA replication and probably DNA repair. The protein is TCF3 fusion partner (TFPT) of Homo sapiens (Human).